The primary structure comprises 180 residues: ATP synthase subunit delta (180 aa).

Belongs to the ATPase delta chain family. F-type ATPases have 2 components, F(1) - the catalytic core - and F(0) - the membrane proton channel. F(1) has five subunits: alpha(3), beta(3), gamma(1), delta(1), epsilon(1). F(0) has three main subunits: a(1), b(2) and c(10-14). The alpha and beta chains form an alternating ring which encloses part of the gamma chain. F(1) is attached to F(0) by a central stalk formed by the gamma and epsilon chains, while a peripheral stalk is formed by the delta and b chains.

It localises to the cell membrane. Its function is as follows. F(1)F(0) ATP synthase produces ATP from ADP in the presence of a proton or sodium gradient. F-type ATPases consist of two structural domains, F(1) containing the extramembraneous catalytic core and F(0) containing the membrane proton channel, linked together by a central stalk and a peripheral stalk. During catalysis, ATP synthesis in the catalytic domain of F(1) is coupled via a rotary mechanism of the central stalk subunits to proton translocation. In terms of biological role, this protein is part of the stalk that links CF(0) to CF(1). It either transmits conformational changes from CF(0) to CF(1) or is implicated in proton conduction. This is ATP synthase subunit delta from Lactobacillus delbrueckii subsp. bulgaricus (strain ATCC BAA-365 / Lb-18).